A 65-amino-acid polypeptide reads, in one-letter code: Crotamine CRO1 (65 aa).

The N-terminal stretch at 1–22 (MKILYLLFAFLFLAFLSEPGNA) is a signal peptide. 3 cysteine pairs are disulfide-bonded: Cys-26-Cys-58, Cys-33-Cys-52, and Cys-40-Cys-59.

Belongs to the crotamine-myotoxin family. In terms of assembly, monomer. Expressed by the venom gland.

It is found in the secreted. Its function is as follows. Cationic peptide that possesses multiple functions. It acts as a cell-penetrating peptide (CPP), and as a potent voltage-gated potassium channel (Kv) inhibitor. It exhibits antimicrobial activities, hind limb paralysis, and severe muscle necrosis by a non-enzymatic mechanism. The chain is Crotamine CRO1 (CRO1) from Crotalus durissus terrificus (South American rattlesnake).